The sequence spans 258 residues: Polysialic acid transport protein KpsM (258 aa).

The region spanning Leu-30–Arg-251 is the ABC transmembrane type-2 domain. Transmembrane regions (helical) follow at residues Leu-33–Ile-53, Ile-61–Ser-81, Ala-110–Met-130, Val-144–Val-164, Leu-175–Ile-195, and Gly-227–Leu-247.

It belongs to the ABC-2 integral membrane protein family.

Its subcellular location is the cell inner membrane. Functionally, kpsM and KpsT constitute a system for the transport of polysialic acid across the cytoplasmic membrane. This Escherichia coli protein is Polysialic acid transport protein KpsM (kpsM).